A 36-amino-acid polypeptide reads, in one-letter code: Conotoxin Cl14.10 (36 aa).

The propeptide occupies 1-2; the sequence is NE.

In terms of processing, contains 2 disulfide bond. In terms of tissue distribution, expressed by the venom duct.

The protein resides in the secreted. The polypeptide is Conotoxin Cl14.10 (Californiconus californicus (California cone)).